Here is a 119-residue protein sequence, read N- to C-terminus: MPRVKGGTVSRQRRKKVLKLAKGYFGSKHRLYKVANQQVMKSGNYAFRDRRQKKRDFRKLWITRINAAARMNGLSYSRLMHGLKLSGIEVNRKMLADLAVNDLSAFNQLADAAKAQLDK.

Belongs to the bacterial ribosomal protein bL20 family.

Its function is as follows. Binds directly to 23S ribosomal RNA and is necessary for the in vitro assembly process of the 50S ribosomal subunit. It is not involved in the protein synthesizing functions of that subunit. The protein is Large ribosomal subunit protein bL20 of Bacillus pumilus (strain SAFR-032).